The sequence spans 378 residues: uncharacterized protein (378 aa).

The segment covering 1 to 11 (MSQQTTPAEQK) has biased composition (polar residues). The tract at residues 1 to 33 (MSQQTTPAEQKSLQRKKPPFRADQVGSLLRSEP) is disordered.

It to B.subtilis YxjH.

This is an uncharacterized protein from Bacillus subtilis (strain 168).